A 1026-amino-acid polypeptide reads, in one-letter code: HEAT repeat-containing protein 4 (1026 aa).

The disordered stretch occupies residues 135 to 175 (AVKTESSANPEKKLKKSKPASTVREAPRPLIHHPCMHPDML). 3 HEAT repeats span residues 530–568 (LLPA…NIMQ), 724–760 (KLMT…QIRD), and 761–794 (KMVL…GQVS).

The sequence is that of HEAT repeat-containing protein 4 (HEATR4) from Homo sapiens (Human).